We begin with the raw amino-acid sequence, 359 residues long: Dual-specificity RNA methyltransferase RlmN (359 aa).

Residue Glu-86 is the Proton acceptor of the active site. The 234-residue stretch at 105-338 (EGEKYTICVS…CTIRESKGID (234 aa)) folds into the Radical SAM core domain. Cys-112 and Cys-343 are joined by a disulfide. Cys-119, Cys-123, and Cys-126 together coordinate [4Fe-4S] cluster. S-adenosyl-L-methionine-binding positions include 169–170 (GE), Ser-201, 224–226 (SLH), and Asn-300. The active-site S-methylcysteine intermediate is Cys-343.

This sequence belongs to the radical SAM superfamily. RlmN family. [4Fe-4S] cluster serves as cofactor.

It localises to the cytoplasm. The enzyme catalyses adenosine(2503) in 23S rRNA + 2 reduced [2Fe-2S]-[ferredoxin] + 2 S-adenosyl-L-methionine = 2-methyladenosine(2503) in 23S rRNA + 5'-deoxyadenosine + L-methionine + 2 oxidized [2Fe-2S]-[ferredoxin] + S-adenosyl-L-homocysteine. The catalysed reaction is adenosine(37) in tRNA + 2 reduced [2Fe-2S]-[ferredoxin] + 2 S-adenosyl-L-methionine = 2-methyladenosine(37) in tRNA + 5'-deoxyadenosine + L-methionine + 2 oxidized [2Fe-2S]-[ferredoxin] + S-adenosyl-L-homocysteine. Functionally, specifically methylates position 2 of adenine 2503 in 23S rRNA and position 2 of adenine 37 in tRNAs. m2A2503 modification seems to play a crucial role in the proofreading step occurring at the peptidyl transferase center and thus would serve to optimize ribosomal fidelity. The protein is Dual-specificity RNA methyltransferase RlmN of Wolinella succinogenes (strain ATCC 29543 / DSM 1740 / CCUG 13145 / JCM 31913 / LMG 7466 / NCTC 11488 / FDC 602W) (Vibrio succinogenes).